The sequence spans 342 residues: Zinc transporter ZIP11 (342 aa).

7 helical membrane-spanning segments follow: residues 12-32 (LLGTFFTWAMTAAGAALVFIF), 44-64 (LGFAAGVMLAASYWSLLAPAV), 72-92 (GFGAFAFFPVAVGFTLGAAFV), 194-214 (IALLILAITIHNIPEGLAVGV), 263-285 (FWYGQLSGMVEPLAGVFGAFAVV), 290-307 (ILPYALAFAAGAMVYVVM), and 322-342 (LASWASILGFVVMMSLDVGLG).

Belongs to the ZIP transporter (TC 2.A.5) family. As to expression, highly expressed in the testes and portions of the digestive system including the stomach, ileum and cecum. In contrast, expressed at very low levels in liver, duodenum, jejunum, and colon.

It is found in the cell membrane. Its subcellular location is the nucleus. The protein localises to the cytoplasm. It localises to the golgi apparatus. The enzyme catalyses Zn(2+)(in) = Zn(2+)(out). The catalysed reaction is Cu(2+)(in) = Cu(2+)(out). Functionally, zinc importer that regulates cytosolic zinc concentration either via zinc influx from the extracellular compartment or efflux from intracellular organelles such as Golgi apparatus. May transport copper ions as well. The transport mechanism remains to be elucidated. This is Zinc transporter ZIP11 (Slc39a11) from Mus musculus (Mouse).